A 70-amino-acid chain; its full sequence is MILYPSIVDLMEKVDSKYTLCALVAKRARQLVAGDKKLVDIDSDKPVTIATEEVYRGLITYERPQKYGIK.

Belongs to the RNA polymerase subunit omega family. The RNAP catalytic core consists of 2 alpha, 1 beta, 1 beta' and 1 omega subunit. When a sigma factor is associated with the core the holoenzyme is formed, which can initiate transcription.

The catalysed reaction is RNA(n) + a ribonucleoside 5'-triphosphate = RNA(n+1) + diphosphate. Promotes RNA polymerase assembly. Latches the N- and C-terminal regions of the beta' subunit thereby facilitating its interaction with the beta and alpha subunits. The protein is DNA-directed RNA polymerase subunit omega of Caldanaerobacter subterraneus subsp. tengcongensis (strain DSM 15242 / JCM 11007 / NBRC 100824 / MB4) (Thermoanaerobacter tengcongensis).